The following is a 511-amino-acid chain: 2,3-bisphosphoglycerate-independent phosphoglycerate mutase (511 aa).

2 residues coordinate Mn(2+): Asp14 and Ser64. Ser64 functions as the Phosphoserine intermediate in the catalytic mechanism. Substrate is bound by residues His125, 155–156 (RD), Arg187, Arg193, 259–262 (RADR), and Lys333. Residues Asp400, His404, Asp441, His442, and His460 each contribute to the Mn(2+) site.

This sequence belongs to the BPG-independent phosphoglycerate mutase family. Monomer. Requires Mn(2+) as cofactor.

It carries out the reaction (2R)-2-phosphoglycerate = (2R)-3-phosphoglycerate. It functions in the pathway carbohydrate degradation; glycolysis; pyruvate from D-glyceraldehyde 3-phosphate: step 3/5. Catalyzes the interconversion of 2-phosphoglycerate and 3-phosphoglycerate. This is 2,3-bisphosphoglycerate-independent phosphoglycerate mutase from Pseudomonas putida (strain ATCC 47054 / DSM 6125 / CFBP 8728 / NCIMB 11950 / KT2440).